A 597-amino-acid chain; its full sequence is Plasmepsin V (597 aa).

Residues 1–551 (MNNYFLRKEN…EKENIFLKVS (551 aa)) are Lumenal-facing. A coiled-coil region spans residues 33-88 (CNNVENKIDNVGKKIENVGKKIGDMENKNDNVENKNDNVENKNDNVGNKNDNVKNA). The span at 58 to 75 (ENKNDNVENKNDNVENKN) shows a compositional bias: basic and acidic residues. Residues 58-83 (ENKNDNVENKNDNVENKNDNVGNKND) are disordered. The 415-residue stretch at 107–521 (YFLDIDIGKP…DLQQNQIAFI (415 aa)) folds into the Peptidase A1 domain. The active site involves D125. 7 disulfide bridges follow: C135-C218, C138-C141, C162-C173, C167-C178, C266-C525, C396-C441, and C450-C486. The segment covering 289–298 (KEKQKMDKSD) has biased composition (basic and acidic residues). The interval 289–323 (KEKQKMDKSDNNSSNKGNVSIKLKNNDKNDDEENN) is disordered. The segment covering 299 to 311 (NNSSNKGNVSIKL) has biased composition (low complexity). D372 is a catalytic residue. The helical transmembrane segment at 552–572 (YINLYCLWLLLALTILLSLIL) threads the bilayer. The Cytoplasmic portion of the chain corresponds to 573–597 (YVRKMFYMDYFPLSDQNKSPIQEST).

Belongs to the peptidase A1 family. As to quaternary structure, component of a complex composed of SPC25 and PMV; the interaction is mediated via the transmembrane domains. The complex interacts with the SEC61 channel-forming translocon complex and is involved in the recognition and import of PEXEL motif-containing proteins into the ER for subsequent export. Post-translationally, it is not clear if the zymogen has a cleavable propeptide. In vitro, appears to be cleaved between Asn-87 and Ala-88. Cleavage of the putative propeptide is dispensable for catalytic activity.

The protein resides in the endoplasmic reticulum membrane. Functionally, during the asexual blood stage, plays an essential role in the export of several proteins into the host erythrocytes by cleaving the pentameric localization motif RxLxE/Q/D (termed Plasmodium export element (PEXEL)) located downstream of the N-terminal secretory signal sequence. Specifically, cleaves after the leucine residue in the RxLxE/Q/D (or RxLxxE) motif of exported proteins including RESA, EMP2, EMP3, KAHRP, RIF/Rifin and STEVOR. Also, by regulating protein export, plays an essential role in gametocyte development and thus parasite transmission to the mosquito vector. The polypeptide is Plasmepsin V (Plasmodium falciparum (isolate HB3)).